Reading from the N-terminus, the 482-residue chain is tRNA sulfurtransferase (482 aa).

Residues 61–165 (NQVLTAVTHT…NEKLNLVIAR (105 aa)) enclose the THUMP domain. ATP is bound by residues 183–184 (LI), Lys-265, Gly-287, and Gln-296. Cys-344 and Cys-456 form a disulfide bridge. The Rhodanese domain maps to 404 to 482 (LGSDVVVLDI…GYKNVKVYRP (79 aa)). The Cysteine persulfide intermediate role is filled by Cys-456.

Belongs to the ThiI family.

The protein resides in the cytoplasm. The enzyme catalyses [ThiI sulfur-carrier protein]-S-sulfanyl-L-cysteine + a uridine in tRNA + 2 reduced [2Fe-2S]-[ferredoxin] + ATP + H(+) = [ThiI sulfur-carrier protein]-L-cysteine + a 4-thiouridine in tRNA + 2 oxidized [2Fe-2S]-[ferredoxin] + AMP + diphosphate. It catalyses the reaction [ThiS sulfur-carrier protein]-C-terminal Gly-Gly-AMP + S-sulfanyl-L-cysteinyl-[cysteine desulfurase] + AH2 = [ThiS sulfur-carrier protein]-C-terminal-Gly-aminoethanethioate + L-cysteinyl-[cysteine desulfurase] + A + AMP + 2 H(+). It participates in cofactor biosynthesis; thiamine diphosphate biosynthesis. In terms of biological role, catalyzes the ATP-dependent transfer of a sulfur to tRNA to produce 4-thiouridine in position 8 of tRNAs, which functions as a near-UV photosensor. Also catalyzes the transfer of sulfur to the sulfur carrier protein ThiS, forming ThiS-thiocarboxylate. This is a step in the synthesis of thiazole, in the thiamine biosynthesis pathway. The sulfur is donated as persulfide by IscS. In Aliivibrio salmonicida (strain LFI1238) (Vibrio salmonicida (strain LFI1238)), this protein is tRNA sulfurtransferase.